A 1196-amino-acid polypeptide reads, in one-letter code: MNAIQQKCRPKHQVLVLKCYPRTTKGAVDVKPNSSELSYLLYYAASRKSKFQKVGSFLEKKTASDVWRLRIGNVQVTLQILEALIEKNPKDLPLFAPSVLKILDLVLKSNDITMVESSTPTFEAFCANHDASSLFADQAYLKQYESIVRQYASLASTRRSPGKTTPSKPVAMRWRNTGLEAIRSVASSDALASVQGTQYDILVPMILENLWTDNEEFLEILLHRAHLEEKVDTDKLLLRRRTSVATVRTAEGGNEPNPIALSGSAMDVDKLAEEDIGVLAITCLKQIFVGPNRSQIHAATVALLKFIEERVNQDENVVKKSARTGRDSGWAIKIFGLISRWAPVQERYVILMTTMDTLVRMPLSDESMRHHIVWMAMMGALLRSDVNLIGLSVMDVLLALMQHMKRLVQLPGDPSGASASDMLLPGQPDPRSPTTIAASTAAQATAAARKELLERIQQTIGDLATHVYYADQISDMISAIIQRLRPSKSNSPGNTSPQGEKIDGQVASPEDSTVESLFSLTVAKVAALKAIKTILLVANPRTKMAGNLGLARNKVSISVWEGTQWLLRDPEGLVRKAYADAVITWLDRETVKGDLKAVDESAPNPRASIRYTRDLGKMDVSPARRAASSASTRREPKPTRLHFLNLIHVAIYDNALQYVDYETDINLLHVLLAKLVDRLGINAVRYGLPMIFRLQEDIQEVDAPIGKVRVGCLVHGYLWALTEKFDFENTLVGRAIHNEIIRRRSKHFWIEGVHVPPPLLELIGTPGMVKPQPKMPLNQIESEALLPFDDRFALIDSICTGYQESFASPPTSPAASPGRSFTSPILGSQMSGLSPHTATDDEREVPSRFRDQMYVEWTRDLVIAMVQAGSKSASLNGSKTGTTGTSRYANARLGGNTGSPMASQQNLRPYSQPAGKDTLAPQNNPLAKLRKSSLRSNATPSPASSGPIRSGVTSVDQLKMVLSGQVAPAVVRAQTSHGNGAGGLGADDSTDSLVSYDMTVSEMSFNAGSVTYTPSHPVPRPPSRSRSHSRERRAASRSGAESPGGFDQLSRSNSFGKSNGNGRTIEDGRHDRHDDDGVPPVPPLPSGVSSPPLPPSRDGKSPSPRSPSTQAPVLPPVSLESSAIRPAKTRSLKSRGRHSRSGSIPSAPAPHAMRPATSAGHGVVGGDSAFDLDALLLGIDTKDMQGTLGNVTRPVY.

Disordered regions lie at residues 486–508 (PSKSNSPGNTSPQGEKIDGQVAS), 806–847 (FASP…EVPS), 872–951 (SASL…IRSG), and 1008–1160 (GSVT…TSAG). Polar residues predominate over residues 487-498 (SKSNSPGNTSPQ). The segment covering 806–817 (FASPPTSPAASP) has biased composition (low complexity). Over residues 819–837 (RSFTSPILGSQMSGLSPHT) the composition is skewed to polar residues. Basic and acidic residues predominate over residues 838–847 (ATDDEREVPS). Polar residues-rich tracts occupy residues 872–888 (SASLNGSKTGTTGTSRY), 898–909 (GSPMASQQNLRP), and 934–944 (LRSNATPSPAS). Over residues 1036 to 1045 (SRSGAESPGG) the composition is skewed to low complexity. Over residues 1049–1062 (LSRSNSFGKSNGNG) the composition is skewed to polar residues. Residues 1064–1076 (TIEDGRHDRHDDD) are compositionally biased toward basic and acidic residues. The segment covering 1079-1095 (PPVPPLPSGVSSPPLPP) has biased composition (pro residues). Positions 1127–1140 (AKTRSLKSRGRHSR) are enriched in basic residues.

It belongs to the EFR3 family.

This is Protein EFR3 (EFR3) from Pyricularia oryzae (strain 70-15 / ATCC MYA-4617 / FGSC 8958) (Rice blast fungus).